The sequence spans 261 residues: MEVIICSDEQAVGRIAADRIAKVLGRAKAPVLGVATGSTPLTTYSSLAALAAEGKADFTDLRAFALDEYIGLPADDERSYAATIRHTVTEQLGLDPANVHTPDGMADDLDAACAAYETAIQEADGVDVQILGIGANGHIGFNEPTSSLSSRTRVKTLAERTKADNARFFEEGEKVPSHCVTQGLGTIMDARNVVLLAIGANKADALAGAVEGPVSAMCPASVLQFHPHVLVIADDAAASKLTMAEYFRWTDSQRGDLSGAM.

D67 functions as the Proton acceptor; for enolization step in the catalytic mechanism. Residue N136 is the For ring-opening step of the active site. The active-site Proton acceptor; for ring-opening step is H138. The active-site For ring-opening step is the E143.

It belongs to the glucosamine/galactosamine-6-phosphate isomerase family. NagB subfamily.

It catalyses the reaction alpha-D-glucosamine 6-phosphate + H2O = beta-D-fructose 6-phosphate + NH4(+). It participates in amino-sugar metabolism; N-acetylneuraminate degradation; D-fructose 6-phosphate from N-acetylneuraminate: step 5/5. Functionally, catalyzes the reversible isomerization-deamination of glucosamine 6-phosphate (GlcN6P) to form fructose 6-phosphate (Fru6P) and ammonium ion. The polypeptide is Glucosamine-6-phosphate deaminase (Cutibacterium acnes (strain DSM 16379 / KPA171202) (Propionibacterium acnes)).